The following is a 353-amino-acid chain: N-acetyl-gamma-glutamyl-phosphate reductase (353 aa).

Cysteine 157 is a catalytic residue.

Belongs to the NAGSA dehydrogenase family. Type 1 subfamily.

The protein resides in the cytoplasm. The enzyme catalyses N-acetyl-L-glutamate 5-semialdehyde + phosphate + NADP(+) = N-acetyl-L-glutamyl 5-phosphate + NADPH + H(+). The protein operates within amino-acid biosynthesis; L-arginine biosynthesis; N(2)-acetyl-L-ornithine from L-glutamate: step 3/4. In terms of biological role, catalyzes the NADPH-dependent reduction of N-acetyl-5-glutamyl phosphate to yield N-acetyl-L-glutamate 5-semialdehyde. This chain is N-acetyl-gamma-glutamyl-phosphate reductase, found in Bordetella avium (strain 197N).